A 558-amino-acid polypeptide reads, in one-letter code: Pyrethroid hydrolase Ces2a (558 aa).

The first 26 residues, 1-26, serve as a signal peptide directing secretion; that stretch reads MPLARLPGWLCVVACGLLLLLQHVHG. Residues Cys-95 and Cys-122 are joined by a disulfide bond. Position 209 is an N6-succinyllysine (Lys-209). Ser-227 (acyl-ester intermediate) is an active-site residue. A glycan (N-linked (GlcNAc...) asparagine) is linked at Asn-275. A disulfide bridge connects residues Cys-279 and Cys-290. Lys-296 bears the N6-succinyllysine mark. The active-site Charge relay system is Glu-344. Residue Asn-361 is glycosylated (N-linked (GlcNAc...) asparagine). His-456 serves as the catalytic Charge relay system.

The protein belongs to the type-B carboxylesterase/lipase family.

It localises to the microsome. It carries out the reaction (-)-trans-permethrin + H2O = (3-phenoxyphenyl)methanol + (1S,3R)-3-(2,2-dichlorovinyl)-2,2-dimethylcyclopropanecarboxylate + H(+). The enzyme catalyses all-trans-retinyl hexadecanoate + H2O = all-trans-retinol + hexadecanoate + H(+). Its function is as follows. Carboxylesterases that catalyzes the hydrolysis of pyrethroids pesticides. Hydrolyzes permethrin faster than cypermethrin. Hydrolyzes retinyl esters. This is Pyrethroid hydrolase Ces2a from Mus musculus (Mouse).